The primary structure comprises 145 residues: Large ribosomal subunit protein uL13 (145 aa).

The protein belongs to the universal ribosomal protein uL13 family. As to quaternary structure, part of the 50S ribosomal subunit.

Functionally, this protein is one of the early assembly proteins of the 50S ribosomal subunit, although it is not seen to bind rRNA by itself. It is important during the early stages of 50S assembly. The polypeptide is Large ribosomal subunit protein uL13 (Bacillus cereus (strain G9842)).